A 142-amino-acid polypeptide reads, in one-letter code: Immunoglobulin iota chain (142 aa).

A signal peptide spans 1-19 (MAWTSVLLMLLAYLTGCGP). The segment at 20-41 (QPMVHQPPLASSSLGATIRLSC) is framework-1. Cys-41 and Cys-115 are oxidised to a cystine. The interval 42–56 (TLSNDHNIGIYSIYW) is complementarity-determining-1. The segment at 57-70 (YQQRPGHPPRFLLR) is framework-2. Residues 71 to 81 (YFSHSDKHQGP) are complementarity-determining-2. Positions 82-115 (DIPPRFSGSKDTTRNLGYLSISELQPEDEAVYYC) are framework-3.

Belongs to the immunoglobulin superfamily. As to quaternary structure, interacts with IGLL1. Interacts with SYNV1/HRD1 (via N-terminus); this interaction leads to increased VPREB1A ubiquitination and degradation in pre-B cells, possibly through a lysosomal, not proteasomal, pathway. Only expressed by pre-B-cells.

The protein resides in the endoplasmic reticulum. Functionally, associates with the Ig-mu chain to form a molecular complex that is expressed on the surface of pre-B-cells. This complex presumably regulates Ig gene rearrangements in the early steps of B-cell differentiation. This is Immunoglobulin iota chain from Mus musculus (Mouse).